Here is a 130-residue protein sequence, read N- to C-terminus: Small ribosomal subunit protein uS8 (130 aa).

Belongs to the universal ribosomal protein uS8 family. As to quaternary structure, part of the 30S ribosomal subunit.

In terms of biological role, one of the primary rRNA binding proteins, it binds directly to 16S rRNA central domain where it helps coordinate assembly of the platform of the 30S subunit. In Pyrococcus abyssi (strain GE5 / Orsay), this protein is Small ribosomal subunit protein uS8.